A 1172-amino-acid chain; its full sequence is MSRGSIEIPLRDTDEVIELDFDQLPEGDEVISILKQEHTQLHIWIALGLEYYKQVKTEDFVKLLEAARIDGNLDYRDHEKDQMTCLDTLAAYYVQQARKEKNKDNKKELITQATLLYTMADKIIMYDQNHLLGRACFCLLEGDKMDQADAQFHFVLNQSPNNIPALLGKACISFNKKDYRGALAYYKKALRTNPGCPAGVRLGMGHCFVKLNKLDKARLAFGRALDLNPTCVGALVGLAVLELNNKEADSIKNGVQLLSKAYTIDPSNPMVLNHLANHFFFKKDYSKVQHLALHAFHNTEVEAMQAESCYQLARSFHVQEDYDQAFQYYYQATQFAAASFVLPFFGLGQMYIYRGDKENASQCFEKVLKAYPNNYETMKILGSLYAASDDQEKRDIAKSHLKKVTEQYPDDVEAWIELAQILEQTDIQNALSAYGTATRILQEKVQADVPPEILNNVGALHFRLGNLGEAKKYFLASLDRAKAEAEHDEHYYNAISVTTTYNLARLYEGLCEFHESEKLYKNILREHPNYVDCYLRLGAMARDKGNFYEASDWFKEALQINQDHPDAWSLIGNLHLAKQEWGPGQKKFERILKQPSTQNDTYSMLALGNVWLQTLHQPTRDREKEKRHQDRALAIYKQVLRNDSKNLYAANGIGAVLAHKGYVREARDVFAQVREATADISDVWLNLAHIYVEQKQYISAVQMYENCLRKFYKHQNTEVLLYLARALFKCGKLQECKQILLKARHVAPNDTVLMFNVALVLQRLATLVLKDEKSNLKAVLNAVKELELAHRYFNYLSKVGDKMRFDLALAASEARQCSDLLSQAQYHVARARKQDEEEKELRAKQEQEKEILRQKLIKEQEEKRLKEIEEQKKLLEQRAQYVEKTRNLLNFTGEMETPKEKKQRGGGGGGGGRRSKKNGEFDEFVNDDSDEDLAPRKKKRKKGGGSSGSGGEQGEGGEEGEGGEKKKKKRRKRPQKGGDGSDDDEDQAPQPKKRQPKKREKPAKFERTPPSMKGKIKSKAIISSSEDDSDEDKLKIADEGHGRGSNSDSDEGPRTQAKKRIMSDSDSDNANKSGSGAGSPQKSPQSDGDSDNNAWARKRRRQDSGSDNDSAQSRRSSGGSDNESRAASRSPESQRGSDRGSDNEGSARASPNESEQEASNNEKSDRGSDDSD.

TPR repeat units lie at residues 41–75, 129–162, 163–196, 198–231, 235–268, 306–339, 341–374, 412–444, 451–484, 497–530, 531–564, 566–598, 613–646, 648–680, 681–714, and 717–750; these read LHIWIALGLEYYKQVKTEDFVKLLEAARIDGNLDY, NHLLGRACFCLLEGDKMDQADAQFHFVLNQSPNN, IPALLGKACISFNKKDYRGALAYYKKALRTNPGC, AGVRLGMGHCFVKLNKLDKARLAFGRALDLNPTC, LVGLAVLELNNKEADSIKNGVQLLSKAYTIDPSN, AESCYQLARSFHVQEDYDQAFQYYYQATQFAAAS, VLPFFGLGQMYIYRGDKENASQCFEKVLKAYPNN, VEAWIELAQILEQTDIQNALSAYGTATRILQEK, PEILNNVGALHFRLGNLGEAKKYFLASLDRAKAE, VTTTYNLARLYEGLCEFHESEKLYKNILREHPNY, VDCYLRLGAMARDKGNFYEASDWFKEALQINQDH, DAWSLIGNLHLAKQEWGPGQKKFERILKQPSTQ, QTLHQPTRDREKEKRHQDRALAIYKQVLRNDSKN, YAANGIGAVLAHKGYVREARDVFAQVREATADI, SDVWLNLAHIYVEQKQYISAVQMYENCLRKFYKH, and TEVLLYLARALFKCGKLQECKQILLKARHVAPND. The segment at 889-1172 is disordered; the sequence is LNFTGEMETP…KSDRGSDDSD (284 aa). Positions 921 to 932 are enriched in acidic residues; the sequence is FDEFVNDDSDED. Residues 944-954 show a composition bias toward gly residues; the sequence is GGSSGSGGEQG. 2 stretches are compositionally biased toward basic residues: residues 965–975 and 991–1001; these read KKKKKRRKRPQ and PKKRQPKKREK. The segment covering 1032–1042 has biased composition (basic and acidic residues); that stretch reads DKLKIADEGHG. Composition is skewed to polar residues over residues 1068 to 1093, 1105 to 1134, and 1149 to 1159; these read DNANKSGSGAGSPQKSPQSDGDSDNN, GSDNDSAQSRRSSGGSDNESRAASRSPESQ, and ASPNESEQEAS. Positions 1160–1172 are enriched in basic and acidic residues; that stretch reads NNEKSDRGSDDSD.

In terms of assembly, component of the PAF1 complex, which at least consists of cdc73, paf1, leo1, ctr9 and rtf1. The PAF1 complex interacts with PHF5A.

It is found in the nucleus speckle. Its function is as follows. Component of the PAF1 complex (PAF1C) which has multiple functions during transcription by RNA polymerase II. PAF1C associates with RNA polymerase II, is involved in transcriptional elongation and in histone modifications including methylation on histone H3 'Lys-4' (H3K4me3). This chain is RNA polymerase-associated protein CTR9 homolog (ctr9), found in Xenopus tropicalis (Western clawed frog).